We begin with the raw amino-acid sequence, 127 residues long: Fluoride-specific ion channel FluC (127 aa).

The next 4 helical transmembrane spans lie at 8-28 (LLIA…QYWF), 37-57 (PWGT…VYAI), 68-88 (WKFL…TFSY), and 100-120 (ILFL…AFAG). Na(+) is bound by residues G78 and T81.

This sequence belongs to the fluoride channel Fluc/FEX (TC 1.A.43) family.

The protein resides in the cell inner membrane. The catalysed reaction is fluoride(in) = fluoride(out). Na(+) is not transported, but it plays an essential structural role and its presence is essential for fluoride channel function. In terms of biological role, fluoride-specific ion channel. Important for reducing fluoride concentration in the cell, thus reducing its toxicity. This is Fluoride-specific ion channel FluC from Leptospira interrogans serogroup Icterohaemorrhagiae serovar Lai (strain 56601).